The sequence spans 260 residues: Putative ABC transporter ATP-binding protein SCO3161 (260 aa).

The region spanning 16–246 (LDVSGLAFAY…DDLMRAHRLE (231 aa)) is the ABC transporter domain. 49–56 (GPNGAGKT) is a binding site for ATP.

This sequence belongs to the ABC transporter superfamily.

It is found in the cell membrane. Functionally, probably part of an ABC transporter complex. Responsible for energy coupling to the transport system. The sequence is that of Putative ABC transporter ATP-binding protein SCO3161 from Streptomyces coelicolor (strain ATCC BAA-471 / A3(2) / M145).